The chain runs to 526 residues: Keratin, type I cytoskeletal 10 (526 aa).

A compositionally biased stretch (low complexity) spans Met1 to Arg15. The disordered stretch occupies residues Met1–Ser29. Residues Met1–Asn126 form a head region. Residues Ser14, Ser16, Ser34, Ser45, Ser48, and Ser151 each carry the phosphoserine modification. The interval Gln127 to Trp162 is coil 1A. The 315-residue stretch at Gln127–Gly441 folds into the IF rod domain. The linker 1 stretch occupies residues Tyr163–Thr183. Residues Ile184 to Leu275 form a coil 1B region. The interval Gln276–Leu298 is linker 12. Residues Leu299–Glu437 form a coil 2 region. The interval Gly438 to Tyr526 is tail. Residues Gly458 to Ser505 show a composition bias toward gly residues. The disordered stretch occupies residues Gly458 to Tyr526. Residues Gly506 to Tyr526 show a composition bias toward low complexity.

This sequence belongs to the intermediate filament family. Heterotetramer of two type I and two type II keratins. Heterodimer with KRT1. Two heterodimers of KRT1 and KRT10 form a heterotetramer. The KRT10 subunit in the heterotetramer is probably disulfide-linked.

It localises to the secreted. Its subcellular location is the extracellular space. The protein localises to the cell surface. It is found in the cytoplasm. Functionally, plays a role in the establishment of the epidermal barrier on plantar skin. Involved in the maintenance of cell layer development and keratin filament bundles in suprabasal cells of the epithelium. The polypeptide is Keratin, type I cytoskeletal 10 (KRT10) (Bos taurus (Bovine)).